The primary structure comprises 343 residues: Trans-enoyl reductase ACTTS2 (343 aa).

An NADP(+)-binding site is contributed by Gly-42–Lys-45. Val-128–Gln-135 is a binding site for substrate. NADP(+)-binding positions include Ser-162 to Thr-165, Ser-185 to Asn-188, and Tyr-203. Gly-268–Leu-272 is a binding site for substrate. An NADP(+)-binding site is contributed by Val-333–Ser-334.

Belongs to the zinc-containing alcohol dehydrogenase family. In terms of assembly, monomer.

It participates in mycotoxin biosynthesis. In terms of biological role, trans-enoyl reductase; part of the gene clusters that mediate the biosynthesis of the host-selective toxins (HSTs) ACT-toxins responsible for brown spot of tangerine disease by the tangerine pathotype which affects tangerines and mandarins. ACT-toxins consist of three moieties, 9,10-epoxy-8-hydroxy-9-methyl-decatrienoic acid (EDA), valine and a polyketide. ACT-toxin I is toxic to both citrus and pear; toxin II the 5''-deoxy derivative of ACT-toxin I, is highly toxic to pear and slightly toxic to citrus. On cellular level, ACT-toxins affect plasma membrane of susceptible cells and cause a sudden increase in loss of K(+) after a few minutes of toxin treatment. The acyl-CoA ligase ACTT1, the hydrolase ACTT2, the enoyl-CoA hydratases ACTT3 and ACTT6, and the acyl-CoA synthetase ACTT5 are all involved in the biosynthesis of the AK-, AF- and ACT-toxin common 9,10-epoxy-8-hydroxy-9-methyl-decatrienoic acid (EDA) structural moiety. The exact role of each enzyme, and of additional enzymes identified within the AF-toxin clusters have still to be determined. On the other hand, ACTTS1 to ACTTS4 are specific to the tangerine pathotype. The function of ACTTS3 is to elongate the polyketide chain portion of ACT-toxin that is unique to this toxin. The enoyl-reductase ACTTS2 might complement the missing enoyl-reductase (ER) domain in ACTTS3 in the synthesis of the polyketide portion of ACT-toxin. The roles of the nonribosomal peptide synthetases-related proteins ACTTS1 and ACTTS4 have also still not been elucidated. The polypeptide is Trans-enoyl reductase ACTTS2 (Alternaria alternata (Alternaria rot fungus)).